The chain runs to 314 residues: Protoheme IX farnesyltransferase (314 aa).

The next 7 membrane-spanning stretches (helical) occupy residues 58–78 (LWLVVATVVGGAFSAGSASVF), 107–127 (AALVFGFVLGILSTVILYVWV), 130–150 (LSAALSVAANAFYVLVYTMLL), 173–193 (WTAVTGSLSWVPVVLFAVVFF), 227–247 (VGRQVVIYSWVMVATSLLLWP), 248–268 (VAGTGIFYPIAAGVLGAVFLL), and 294–314 (SSNLYLSLLFVAVALDPLLAG).

This sequence belongs to the UbiA prenyltransferase family. Protoheme IX farnesyltransferase subfamily.

It localises to the cell membrane. It catalyses the reaction heme b + (2E,6E)-farnesyl diphosphate + H2O = Fe(II)-heme o + diphosphate. The protein operates within porphyrin-containing compound metabolism; heme O biosynthesis; heme O from protoheme: step 1/1. Converts heme B (protoheme IX) to heme O by substitution of the vinyl group on carbon 2 of heme B porphyrin ring with a hydroxyethyl farnesyl side group. This chain is Protoheme IX farnesyltransferase, found in Nocardioides sp. (strain ATCC BAA-499 / JS614).